Reading from the N-terminus, the 420-residue chain is MIOREX complex component 9 (420 aa).

2 helical membrane passes run 125–145 (VYKVSPFFIIFATASIFTFIL) and 149–169 (IVVIPLIFHFFFPLLIMFFFF).

In terms of assembly, associates with the mitochondrial ribosome.

The protein resides in the mitochondrion. Its subcellular location is the mitochondrion membrane. Functionally, component of MIOREX complexes, large expressome-like assemblies of ribosomes with factors involved in all the steps of post-transcriptional gene expression. The chain is MIOREX complex component 9 from Saccharomyces cerevisiae (strain ATCC 204508 / S288c) (Baker's yeast).